Consider the following 339-residue polypeptide: UPF0324 membrane protein spyM18_1033 (339 aa).

9 consecutive transmembrane segments (helical) span residues K7–L24, F28–H50, G57–L79, A84–G106, A118–I140, A150–L172, F256–V275, F290–L307, and A314–L336.

Belongs to the UPF0324 family.

It localises to the cell membrane. This is UPF0324 membrane protein spyM18_1033 from Streptococcus pyogenes serotype M18 (strain MGAS8232).